The following is a 96-amino-acid chain: Large ribosomal subunit protein bL27 (96 aa).

Positions 1 to 9 (MLNMNLQLL) are excised as a propeptide.

It belongs to the bacterial ribosomal protein bL27 family. The N-terminus is cleaved by ribosomal processing cysteine protease Prp.

In Clostridioides difficile (strain 630) (Peptoclostridium difficile), this protein is Large ribosomal subunit protein bL27.